The chain runs to 107 residues: MREMMSMMKKAKEMQERMQKIQEEMANLQATGTAGGDLVSITLNGKNIITAIQIDPSLLKPEEAEILEDLIMAAYNEARAKIDNALEEKTKSMTAGLPLPSGFKLPF.

This sequence belongs to the YbaB/EbfC family. Homodimer.

It localises to the cytoplasm. The protein resides in the nucleoid. In terms of biological role, binds to DNA and alters its conformation. May be involved in regulation of gene expression, nucleoid organization and DNA protection. In Bartonella tribocorum (strain CIP 105476 / IBS 506), this protein is Nucleoid-associated protein BT_0257.